We begin with the raw amino-acid sequence, 58 residues long: ATP synthase F(0) complex subunit k, mitochondrial (58 aa).

An N6-acetyllysine mark is found at Lys-16 and Lys-17. The helical transmembrane segment at 23–45 (TLTGRMNCVLATYGGIALLVLYF) threads the bilayer.

Component of the ATP synthase complex composed at least of ATP5F1A/subunit alpha, ATP5F1B/subunit beta, ATP5MC1/subunit c (homooctomer), MT-ATP6/subunit a, MT-ATP8/subunit 8, ATP5ME/subunit e, ATP5MF/subunit f, ATP5MG/subunit g, ATP5MK/subunit k, ATP5MJ/subunit j, ATP5F1C/subunit gamma, ATP5F1D/subunit delta, ATP5F1E/subunit epsilon, ATP5PF/subunit F6, ATP5PB/subunit b, ATP5PD/subunit d, ATP5PO/subunit OSCP. ATP synthase complex consists of a soluble F(1) head domain (subunits alpha(3) and beta(3)) - the catalytic core - and a membrane F(0) domain - the membrane proton channel (subunits c, a, 8, e, f, g, k and j). These two domains are linked by a central stalk (subunits gamma, delta, and epsilon) rotating inside the F1 region and a stationary peripheral stalk (subunits F6, b, d, and OSCP). The ATP synthase complex/complex V exists as a monomeric and a dimeric supercomplex that helps shape mitochondrial cristae to optimize proton flow. As to expression, ubiquitous. Highly expressed in skeletal and cardiac muscle. Moderately expressed in brain, thymus, stomach and testis. Lowest expression levels were detected in lung, liver, kidney, adrenal gland, spleen, small intestine and adipose tissue. In streptozotocin-induced diabetes, the insulin-sensitive tissues skeletal and cardiac muscle were down-regulated.

The protein localises to the mitochondrion membrane. Its function is as follows. Subunit k, of the mitochondrial membrane ATP synthase complex (F(1)F(0) ATP synthase or Complex V) that produces ATP from ADP in the presence of a proton gradient across the membrane which is generated by electron transport complexes of the respiratory chain. ATP synthase complex consist of a soluble F(1) head domain - the catalytic core - and a membrane F(1) domain - the membrane proton channel. These two domains are linked by a central stalk rotating inside the F(1) region and a stationary peripheral stalk. During catalysis, ATP synthesis in the catalytic domain of F(1) is coupled via a rotary mechanism of the central stalk subunits to proton translocation. In vivo, can only synthesize ATP although its ATP hydrolase activity can be activated artificially in vitro. Part of the complex F(0) domain. Required for dimerization of the ATP synthase complex and as such regulates ATP synthesis in the mitochondria. The sequence is that of ATP synthase F(0) complex subunit k, mitochondrial (Atp5mk) from Rattus norvegicus (Rat).